The following is a 268-amino-acid chain: Calpain small subunit 1 (268 aa).

Met-1 carries the N-acetylmethionine modification. Ser-6 carries the post-translational modification Phosphoserine. The EF-hand 1; atypical domain maps to Glu-96–Arg-130. Ca(2+) contacts are provided by Ala-109, Asp-112, Glu-114, Glu-119, Asp-137, Asp-152, Asp-154, Thr-156, Lys-158, and Glu-163. EF-hand domains are found at residues Phe-139–Lys-172, Asn-169–His-204, Leu-205–Leu-233, and Val-234–Ser-268. N6-acetyllysine is present on Lys-179. Ca(2+) is bound by residues Asp-182, Asp-184, Ser-186, Thr-188, Glu-193, and Asp-225.

In terms of assembly, homodimer or heterodimer of a large (catalytic) and a small (regulatory) subunit. In presence of calcium, the heterodimer dissociates.

The protein resides in the cytoplasm. It is found in the cell membrane. Regulatory subunit of the calcium-regulated non-lysosomal thiol-protease which catalyzes limited proteolysis of substrates involved in cytoskeletal remodeling and signal transduction. Essential for embryonic development. The polypeptide is Calpain small subunit 1 (Capns1) (Mus musculus (Mouse)).